Here is a 174-residue protein sequence, read N- to C-terminus: Crossover junction endodeoxyribonuclease RuvC (174 aa).

Residues aspartate 8, glutamate 67, and aspartate 139 contribute to the active site. Mg(2+) is bound by residues aspartate 8, glutamate 67, and aspartate 139.

The protein belongs to the RuvC family. Homodimer which binds Holliday junction (HJ) DNA. The HJ becomes 2-fold symmetrical on binding to RuvC with unstacked arms; it has a different conformation from HJ DNA in complex with RuvA. In the full resolvosome a probable DNA-RuvA(4)-RuvB(12)-RuvC(2) complex forms which resolves the HJ. The cofactor is Mg(2+).

The protein localises to the cytoplasm. The enzyme catalyses Endonucleolytic cleavage at a junction such as a reciprocal single-stranded crossover between two homologous DNA duplexes (Holliday junction).. Its function is as follows. The RuvA-RuvB-RuvC complex processes Holliday junction (HJ) DNA during genetic recombination and DNA repair. Endonuclease that resolves HJ intermediates. Cleaves cruciform DNA by making single-stranded nicks across the HJ at symmetrical positions within the homologous arms, yielding a 5'-phosphate and a 3'-hydroxyl group; requires a central core of homology in the junction. The consensus cleavage sequence is 5'-(A/T)TT(C/G)-3'. Cleavage occurs on the 3'-side of the TT dinucleotide at the point of strand exchange. HJ branch migration catalyzed by RuvA-RuvB allows RuvC to scan DNA until it finds its consensus sequence, where it cleaves and resolves the cruciform DNA. The sequence is that of Crossover junction endodeoxyribonuclease RuvC from Pseudomonas putida (strain ATCC 47054 / DSM 6125 / CFBP 8728 / NCIMB 11950 / KT2440).